We begin with the raw amino-acid sequence, 281 residues long: Biotin synthase (281 aa).

In terms of domain architecture, Radical SAM core spans M1–R230. [4Fe-4S] cluster contacts are provided by C18, C22, and C25. Positions 62, 97, and 223 each coordinate [2Fe-2S] cluster.

The protein belongs to the radical SAM superfamily. Biotin synthase family. Homodimer. The cofactor is [4Fe-4S] cluster. It depends on [2Fe-2S] cluster as a cofactor.

The catalysed reaction is (4R,5S)-dethiobiotin + (sulfur carrier)-SH + 2 reduced [2Fe-2S]-[ferredoxin] + 2 S-adenosyl-L-methionine = (sulfur carrier)-H + biotin + 2 5'-deoxyadenosine + 2 L-methionine + 2 oxidized [2Fe-2S]-[ferredoxin]. It functions in the pathway cofactor biosynthesis; biotin biosynthesis; biotin from 7,8-diaminononanoate: step 2/2. Catalyzes the conversion of dethiobiotin (DTB) to biotin by the insertion of a sulfur atom into dethiobiotin via a radical-based mechanism. The chain is Biotin synthase from Sulfurimonas denitrificans (strain ATCC 33889 / DSM 1251) (Thiomicrospira denitrificans (strain ATCC 33889 / DSM 1251)).